Here is a 266-residue protein sequence, read N- to C-terminus: 26 kDa endochitinase 2 (266 aa).

The N-terminal stretch at 1 to 23 (MRSLAVVVAVVATVAMAIGTARG) is a signal peptide. 3 disulfide bridges follow: Cys46–Cys108, Cys120–Cys128, and Cys227–Cys259. The active-site Proton donor is the Glu90.

The protein belongs to the glycosyl hydrolase 19 family. Chitinase class II subfamily.

It carries out the reaction Random endo-hydrolysis of N-acetyl-beta-D-glucosaminide (1-&gt;4)-beta-linkages in chitin and chitodextrins.. Functionally, defense against chitin-containing fungal pathogens. This Hordeum vulgare (Barley) protein is 26 kDa endochitinase 2.